A 361-amino-acid polypeptide reads, in one-letter code: MEPGAAELYDQALLGILQHVGNVQDFLRVLFGFLYRKTDFYRLLRHPSDRMGFPPGAAQALVLQVFKTFDHMARQDDEKRRQELEEKIRRKEEEEAKTVSAAAAEKEPVPVPVQEIEIDSTTELGGRQEVEKVQPPGPVKEMAHGSLEAEAPGAVAGAAEVPREPPVLPRIQEQFQKNPDSYNGAVRENYTWSQDYTDLEVRVPVPKHVVKGKQVSVALSSSSIRVAMLEENGERVLMEGKLTHKINTESSLWSLEPGKCVLVNLSKVGEYWWNAILEGEEPIDIDKINKERSMATVDEEEQAVLDRLTFDYHQKLQGKPQSHELKVHEMLKKGWDAEGSPFRGQRFDPAMFNISPGAVQF.

Residues 87 to 97 (KIRRKEEEEAK) are compositionally biased toward basic and acidic residues. Residues 87–106 (KIRRKEEEEAKTVSAAAAEK) are disordered. Phosphoserine is present on Ser-146. The region spanning 185–277 (AVRENYTWSQ…VGEYWWNAIL (93 aa)) is the CS domain. 2 positions are modified to phosphoserine: Ser-340 and Ser-355.

This chain is NudC domain-containing protein 3 (NUDCD3), found in Pongo abelii (Sumatran orangutan).